The sequence spans 123 residues: MAKIKARDLRGKKKEELLKQLDDLKVELSQLRVAKVTGGAASKLSKIRVVRKSIARVLTVINQTQKENLRKFYKGKKYKPLDLRPKKTRAMRRRLTKHEEKLKTKKQQRKERLYPLRKYAVKA.

At Lys-19 the chain carries N6-acetyllysine. A Glycyl lysine isopeptide (Lys-Gly) (interchain with G-Cter in SUMO2) cross-link involves residue Lys-25. Ser-29 is subject to Phosphoserine. At Lys-43 the chain carries N6-acetyllysine. Positions 100–123 (EKLKTKKQQRKERLYPLRKYAVKA) are disordered.

It belongs to the universal ribosomal protein uL29 family. Component of the large ribosomal subunit.

The protein resides in the cytoplasm. Its function is as follows. Component of the large ribosomal subunit. The ribosome is a large ribonucleoprotein complex responsible for the synthesis of proteins in the cell. This Mus musculus (Mouse) protein is Large ribosomal subunit protein uL29 (Rpl35).